We begin with the raw amino-acid sequence, 247 residues long: Synaptogyrin homolog 1 (247 aa).

In terms of domain architecture, MARVEL spans 21–175 (FFKKPTVLFR…AAFFAWRRYE (155 aa)). Transmembrane regions (helical) follow at residues 25–45 (PTVL…YSVS), 69–89 (CSFA…LIVL), 105–125 (AVLA…IGFF), and 151–171 (FGIL…FFAW). Residues 206-247 (DSTGIGHVGAPPPQSSYQSGAAPQTMQQPPSNPYTQSEGYGY) are disordered. Residues 220-247 (SSYQSGAAPQTMQQPPSNPYTQSEGYGY) show a composition bias toward polar residues.

The protein belongs to the synaptogyrin family. In terms of tissue distribution, expressed in a wide variety of neurons and is expressed weakly in the non-neuronal distal tip cells. A punctate pattern was observed in the ventral and dorsal nerve cords and the nerve ring. Weak expression is seen in neuronal cell bodies and commissures.

It localises to the membrane. This chain is Synaptogyrin homolog 1 (sng-1), found in Caenorhabditis elegans.